The chain runs to 225 residues: Small ribosomal subunit protein uS7 (225 aa).

Residue serine 2 is modified to N-acetylserine. At threonine 27 the chain carries Phosphothreonine. Glycyl lysine isopeptide (Lys-Gly) (interchain with G-Cter in ubiquitin) cross-links involve residues lysine 45 and lysine 203.

This sequence belongs to the universal ribosomal protein uS7 family. As to quaternary structure, component of the small ribosomal subunit (SSU). Mature yeast ribosomes consist of a small (40S) and a large (60S) subunit. The 40S small subunit contains 1 molecule of ribosomal RNA (18S rRNA) and 33 different proteins (encoded by 57 genes). The large 60S subunit contains 3 rRNA molecules (25S, 5.8S and 5S rRNA) and 46 different proteins (encoded by 81 genes). N-terminally acetylated by acetyltransferase NatA.

The protein resides in the cytoplasm. Component of the ribosome, a large ribonucleoprotein complex responsible for the synthesis of proteins in the cell. The small ribosomal subunit (SSU) binds messenger RNAs (mRNAs) and translates the encoded message by selecting cognate aminoacyl-transfer RNA (tRNA) molecules. The large subunit (LSU) contains the ribosomal catalytic site termed the peptidyl transferase center (PTC), which catalyzes the formation of peptide bonds, thereby polymerizing the amino acids delivered by tRNAs into a polypeptide chain. The nascent polypeptides leave the ribosome through a tunnel in the LSU and interact with protein factors that function in enzymatic processing, targeting, and the membrane insertion of nascent chains at the exit of the ribosomal tunnel. The polypeptide is Small ribosomal subunit protein uS7 (Saccharomyces cerevisiae (strain ATCC 204508 / S288c) (Baker's yeast)).